Reading from the N-terminus, the 100-residue chain is Urease subunit gamma (100 aa).

Belongs to the urease gamma subunit family. In terms of assembly, heterotrimer of UreA (gamma), UreB (beta) and UreC (alpha) subunits. Three heterotrimers associate to form the active enzyme.

It localises to the cytoplasm. It carries out the reaction urea + 2 H2O + H(+) = hydrogencarbonate + 2 NH4(+). Its pathway is nitrogen metabolism; urea degradation; CO(2) and NH(3) from urea (urease route): step 1/1. This is Urease subunit gamma from Actinobacillus pleuropneumoniae serotype 5b (strain L20).